Here is a 135-residue protein sequence, read N- to C-terminus: Endoribonuclease YbeY (135 aa).

Zn(2+) is bound by residues His94, His98, and His104.

Belongs to the endoribonuclease YbeY family. Zn(2+) serves as cofactor.

It is found in the cytoplasm. In terms of biological role, single strand-specific metallo-endoribonuclease involved in late-stage 70S ribosome quality control and in maturation of the 3' terminus of the 16S rRNA. In Campylobacter jejuni subsp. jejuni serotype O:2 (strain ATCC 700819 / NCTC 11168), this protein is Endoribonuclease YbeY.